A 136-amino-acid chain; its full sequence is Large ribosomal subunit protein uL16 (136 aa).

Belongs to the universal ribosomal protein uL16 family. As to quaternary structure, part of the 50S ribosomal subunit.

Functionally, binds 23S rRNA and is also seen to make contacts with the A and possibly P site tRNAs. The polypeptide is Large ribosomal subunit protein uL16 (Actinobacillus pleuropneumoniae serotype 5b (strain L20)).